Consider the following 291-residue polypeptide: Protease HtpX homolog (291 aa).

A run of 2 helical transmembrane segments spans residues 4–24 and 38–58; these read IVLFLLTNFAVILVLSISARL and MGMLLAFAALIGFGGSFISLM. His144 contributes to the Zn(2+) binding site. The active site involves Glu145. A Zn(2+)-binding site is contributed by His148. 2 helical membrane-spanning segments follow: residues 152-172 and 199-219; these read GDMVTLTLIQGVVNTFVIFLA and VSSIAFEIMFGILASIVVMFF. Residue Glu224 coordinates Zn(2+).

The protein belongs to the peptidase M48B family. It depends on Zn(2+) as a cofactor.

It is found in the cell inner membrane. This Prosthecochloris aestuarii (strain DSM 271 / SK 413) protein is Protease HtpX homolog.